A 73-amino-acid chain; its full sequence is MSSSFFKKRLSPIKPGDPIDYKDVDLLKKFITDRGKILPRRLTGLTSKQQRDLTNAVKRARIIALLPFVNPEG.

This sequence belongs to the bacterial ribosomal protein bS18 family. In terms of assembly, part of the 30S ribosomal subunit. Forms a tight heterodimer with protein bS6.

Binds as a heterodimer with protein bS6 to the central domain of the 16S rRNA, where it helps stabilize the platform of the 30S subunit. The polypeptide is Small ribosomal subunit protein bS18 (Prochlorococcus marinus (strain MIT 9313)).